We begin with the raw amino-acid sequence, 145 residues long: D-aminoacyl-tRNA deacylase (145 aa).

Residues 137 to 138 (GP) carry the Gly-cisPro motif, important for rejection of L-amino acids motif.

This sequence belongs to the DTD family. In terms of assembly, homodimer.

It is found in the cytoplasm. It carries out the reaction glycyl-tRNA(Ala) + H2O = tRNA(Ala) + glycine + H(+). It catalyses the reaction a D-aminoacyl-tRNA + H2O = a tRNA + a D-alpha-amino acid + H(+). An aminoacyl-tRNA editing enzyme that deacylates mischarged D-aminoacyl-tRNAs. Also deacylates mischarged glycyl-tRNA(Ala), protecting cells against glycine mischarging by AlaRS. Acts via tRNA-based rather than protein-based catalysis; rejects L-amino acids rather than detecting D-amino acids in the active site. By recycling D-aminoacyl-tRNA to D-amino acids and free tRNA molecules, this enzyme counteracts the toxicity associated with the formation of D-aminoacyl-tRNA entities in vivo and helps enforce protein L-homochirality. The polypeptide is D-aminoacyl-tRNA deacylase (Alcanivorax borkumensis (strain ATCC 700651 / DSM 11573 / NCIMB 13689 / SK2)).